An 887-amino-acid polypeptide reads, in one-letter code: ATP-dependent DNA helicase srs2 (887 aa).

In terms of domain architecture, UvrD-like helicase ATP-binding spans 9 to 304 (KFLNEEQRIS…LHLERNYRSA (296 aa)). ATP contacts are provided by residues 33 to 38 (GSGKTR) and arginine 302. Residues 305–597 (KPILELALSI…TISTLHAAKG (293 aa)) form the UvrD-like helicase C-terminal domain.

The protein belongs to the helicase family. UvrD subfamily.

It is found in the nucleus. It carries out the reaction Couples ATP hydrolysis with the unwinding of duplex DNA by translocating in the 3'-5' direction.. The enzyme catalyses ATP + H2O = ADP + phosphate + H(+). Functionally, ATP-dependent DNA helicase involved in DNA repair at least for UV-induced lesions. Also aids the recombinational repair of camptothecin-induced collapsed replication forks. This chain is ATP-dependent DNA helicase srs2 (srs2), found in Schizosaccharomyces pombe (strain 972 / ATCC 24843) (Fission yeast).